We begin with the raw amino-acid sequence, 247 residues long: V-type proton ATPase subunit D (247 aa).

Belongs to the V-ATPase D subunit family. V-ATPase is a heteromultimeric enzyme made up of two complexes: the ATP-hydrolytic V1 complex and the proton translocation V0 complex. The V1 complex consists of three catalytic AB heterodimers that form a heterohexamer, three peripheral stalks each consisting of EG heterodimers, one central rotor including subunits D and F, and the regulatory subunits C and H. The proton translocation complex V0 consists of the proton transport subunit a, a ring of proteolipid subunits c9c'', rotary subunit d, subunits e and f, and the accessory subunits ATP6AP1/Ac45 and ATP6AP2/PRR. Interacts with SNX10.

Its subcellular location is the membrane. It localises to the cytoplasmic vesicle. The protein resides in the clathrin-coated vesicle membrane. It is found in the cytoplasm. The protein localises to the cytoskeleton. Its subcellular location is the microtubule organizing center. It localises to the centrosome. The protein resides in the cell projection. It is found in the cilium. Subunit of the V1 complex of vacuolar(H+)-ATPase (V-ATPase), a multisubunit enzyme composed of a peripheral complex (V1) that hydrolyzes ATP and a membrane integral complex (V0) that translocates protons. V-ATPase is responsible for acidifying and maintaining the pH of intracellular compartments and in some cell types, is targeted to the plasma membrane, where it is responsible for acidifying the extracellular environment. May play a role in cilium biogenesis through regulation of the transport and the localization of proteins to the cilium. This chain is V-type proton ATPase subunit D (ATP6V1D), found in Homo sapiens (Human).